Reading from the N-terminus, the 365-residue chain is DNA replication and repair protein RecF (365 aa).

ATP is bound at residue 30–37 (GQNGSGKT).

Belongs to the RecF family.

Its subcellular location is the cytoplasm. Functionally, the RecF protein is involved in DNA metabolism; it is required for DNA replication and normal SOS inducibility. RecF binds preferentially to single-stranded, linear DNA. It also seems to bind ATP. The protein is DNA replication and repair protein RecF of Shewanella woodyi (strain ATCC 51908 / MS32).